We begin with the raw amino-acid sequence, 164 residues long: Cyclic pyranopterin monophosphate synthase (164 aa).

Residues M75–H77 and M116–E117 each bind substrate. D131 is an active-site residue.

It belongs to the MoaC family. Homohexamer; trimer of dimers.

The catalysed reaction is (8S)-3',8-cyclo-7,8-dihydroguanosine 5'-triphosphate = cyclic pyranopterin phosphate + diphosphate. Its pathway is cofactor biosynthesis; molybdopterin biosynthesis. Its function is as follows. Catalyzes the conversion of (8S)-3',8-cyclo-7,8-dihydroguanosine 5'-triphosphate to cyclic pyranopterin monophosphate (cPMP). This is Cyclic pyranopterin monophosphate synthase from Staphylococcus aureus (strain MRSA252).